The primary structure comprises 247 residues: ATP synthase subunit a, chloroplastic (247 aa).

The next 5 membrane-spanning stretches (helical) occupy residues Gln-38 to Val-58, Val-95 to Leu-115, Ile-134 to Ser-154, Leu-199 to Leu-219, and Gly-220 to Gly-240.

This sequence belongs to the ATPase A chain family. In terms of assembly, F-type ATPases have 2 components, CF(1) - the catalytic core - and CF(0) - the membrane proton channel. CF(1) has five subunits: alpha(3), beta(3), gamma(1), delta(1), epsilon(1). CF(0) has four main subunits: a, b, b' and c.

The protein resides in the plastid. It is found in the chloroplast thylakoid membrane. Functionally, key component of the proton channel; it plays a direct role in the translocation of protons across the membrane. The sequence is that of ATP synthase subunit a, chloroplastic from Oryza nivara (Indian wild rice).